Consider the following 302-residue polypeptide: Dihydroorotate dehydrogenase B (NAD(+)), catalytic subunit (302 aa).

Residues S23 and 47 to 48 contribute to the FMN site; that span reads KG. Residues K47 and 71 to 75 each bind substrate; that span reads NSVGL. Positions 101 and 128 each coordinate FMN. N128 lines the substrate pocket. The active-site Nucleophile is C131. FMN-binding residues include K166 and I192. 193-194 lines the substrate pocket; it reads NT. Residues G218, 244 to 245, and 266 to 267 contribute to the FMN site; these read GG and GT.

This sequence belongs to the dihydroorotate dehydrogenase family. Type 1 subfamily. Heterotetramer of 2 PyrK and 2 PyrD type B subunits. It depends on FMN as a cofactor.

The protein localises to the cytoplasm. It carries out the reaction (S)-dihydroorotate + NAD(+) = orotate + NADH + H(+). It participates in pyrimidine metabolism; UMP biosynthesis via de novo pathway; orotate from (S)-dihydroorotate (NAD(+) route): step 1/1. Its function is as follows. Catalyzes the conversion of dihydroorotate to orotate with NAD(+) as electron acceptor. This Alkaliphilus metalliredigens (strain QYMF) protein is Dihydroorotate dehydrogenase B (NAD(+)), catalytic subunit (pyrD).